The sequence spans 94 residues: Aspartyl/glutamyl-tRNA(Asn/Gln) amidotransferase subunit C (94 aa).

It belongs to the GatC family. In terms of assembly, heterotrimer of A, B and C subunits.

It catalyses the reaction L-glutamyl-tRNA(Gln) + L-glutamine + ATP + H2O = L-glutaminyl-tRNA(Gln) + L-glutamate + ADP + phosphate + H(+). The enzyme catalyses L-aspartyl-tRNA(Asn) + L-glutamine + ATP + H2O = L-asparaginyl-tRNA(Asn) + L-glutamate + ADP + phosphate + 2 H(+). Functionally, allows the formation of correctly charged Asn-tRNA(Asn) or Gln-tRNA(Gln) through the transamidation of misacylated Asp-tRNA(Asn) or Glu-tRNA(Gln) in organisms which lack either or both of asparaginyl-tRNA or glutaminyl-tRNA synthetases. The reaction takes place in the presence of glutamine and ATP through an activated phospho-Asp-tRNA(Asn) or phospho-Glu-tRNA(Gln). In Hydrogenobaculum sp. (strain Y04AAS1), this protein is Aspartyl/glutamyl-tRNA(Asn/Gln) amidotransferase subunit C.